We begin with the raw amino-acid sequence, 432 residues long: Polypyrimidine tract-binding protein homolog 3 (432 aa).

RRM domains lie at 6-80 (KVVH…FSSH), 98-187 (NRIL…YNND), 245-319 (CTVL…FSKH), and 355-429 (KMIH…FSQL).

It is found in the nucleus. Functionally, plays a role in pre-mRNA splicing. Binds to the polypyrimidine tract of introns. May promote the binding of U2 snRNP to pre-mRNA. The sequence is that of Polypyrimidine tract-binding protein homolog 3 from Arabidopsis thaliana (Mouse-ear cress).